The following is a 356-amino-acid chain: Caspase activity and apoptosis inhibitor 1 (356 aa).

The span at 1-14 (MTGKKSSREKRRKR) shows a compositional bias: basic residues. 2 disordered regions span residues 1-24 (MTGKKSSREKRRKRSGQEAAASLA) and 54-80 (VAGGAERSERRKRRSTDSSSSVSGSLQ). Residue S68 is modified to Phosphoserine. T69 carries the phosphothreonine modification. Residue K84 forms a Glycyl lysine isopeptide (Lys-Gly) (interchain with G-Cter in SUMO2) linkage. Phosphoserine occurs at positions 100 and 183. A disordered region spans residues 208–234 (DSTSSLRENKQPEVLESKQGKGEDSDV). The segment covering 214-231 (RENKQPEVLESKQGKGED) has biased composition (basic and acidic residues). A coiled-coil region spans residues 276-306 (ENTVQSEAGQIDDLERDIEKSVNEILGLAES). Phosphoserine is present on S307.

In terms of biological role, anti-apoptotic protein that modulates a caspase-10 dependent mitochondrial caspase-3/9 feedback amplification loop. This is Caspase activity and apoptosis inhibitor 1 (Caap1) from Mus musculus (Mouse).